Here is a 502-residue protein sequence, read N- to C-terminus: MSQEKYIMAIDQGTTSSRAIIFNKKGEKVSSSQKEFTQIFPQAGWVEHNANEIWNSVQSVIAGAFIESGVKPNQIEAIGITNQRETTVVWDKNTGLPIYNAIVWQSRQTAPLAEQLKSQGYVEKFHEKTGLIIDAYFSATKVRWILDHVEGAQERAEKGELLFGTIDTWLVWKLTDGAAHVTDYSNAARTMLYNIKELKWDDEILEILNIPKAMLPEVRSNSEIYGKTAPFHFYGGEVPISGMAGDQQAALFGQLAFEPGMVKNTYGTGSFIIMNTGEEMQLSENNLLTTIGYGINGKVYYALEGSIFIAGSAIQWLRDGLRMVENSPESEKYALNSHNNDEVYVVPAFTGLGAPYWDQNARGSVFGLTRGTSKEDFIKATLQSIAYQVRDIIDTMQVDAKTAIQVLKVDGGAAMNNFLMQFQADILGIDIARAKNLETTALGAAFLAGLSVGYWKDLDELRTLNETGELFEPSMNESRKEQLYKGWKKAVKATQVFAEIDD.

ADP is bound at residue Thr14. ATP contacts are provided by Thr14, Thr15, and Ser16. Thr14 contacts sn-glycerol 3-phosphate. Arg18 is a binding site for ADP. Sn-glycerol 3-phosphate is bound by residues Arg84, Glu85, and Tyr136. Residues Arg84, Glu85, and Tyr136 each coordinate glycerol. The residue at position 232 (His232) is a Phosphohistidine; by HPr. Asp246 lines the sn-glycerol 3-phosphate pocket. The glycerol site is built by Asp246 and Gln247. ADP is bound by residues Thr268 and Gly311. Positions 268, 311, 315, and 412 each coordinate ATP. 2 residues coordinate ADP: Gly412 and Asn416.

It belongs to the FGGY kinase family. In terms of assembly, homotetramer and homodimer (in equilibrium). Post-translationally, the phosphoenolpyruvate-dependent sugar phosphotransferase system (PTS), including enzyme I, and histidine-containing protein (HPr) are required for the phosphorylation, which leads to the activation of the enzyme.

The enzyme catalyses glycerol + ATP = sn-glycerol 3-phosphate + ADP + H(+). The protein operates within polyol metabolism; glycerol degradation via glycerol kinase pathway; sn-glycerol 3-phosphate from glycerol: step 1/1. Its activity is regulated as follows. Activated by phosphorylation and inhibited by fructose 1,6-bisphosphate (FBP). Functionally, key enzyme in the regulation of glycerol uptake and metabolism. Catalyzes the phosphorylation of glycerol to yield sn-glycerol 3-phosphate. The polypeptide is Glycerol kinase (Streptococcus gordonii (strain Challis / ATCC 35105 / BCRC 15272 / CH1 / DL1 / V288)).